The chain runs to 104 residues: Large ribosomal subunit protein uL24 (104 aa).

Belongs to the universal ribosomal protein uL24 family. As to quaternary structure, part of the 50S ribosomal subunit.

Its function is as follows. One of two assembly initiator proteins, it binds directly to the 5'-end of the 23S rRNA, where it nucleates assembly of the 50S subunit. In terms of biological role, one of the proteins that surrounds the polypeptide exit tunnel on the outside of the subunit. The chain is Large ribosomal subunit protein uL24 from Bartonella henselae (strain ATCC 49882 / DSM 28221 / CCUG 30454 / Houston 1) (Rochalimaea henselae).